Consider the following 228-residue polypeptide: Auxin-responsive protein IAA16 (228 aa).

An EAR-like (transcriptional repression) motif is present at residues 19 to 23 (LSLAL). Residues 28 to 39 (SSSGLQGNTSTA) show a composition bias toward polar residues. Disordered stretches follow at residues 28 to 57 (SSSGLQGNTSTAADGAKGNDGFKASRPAAP) and 70 to 90 (NLASSSSSSKPPRGGRDAAAA). Residues 97–214 (ARFVKVNMDG…RVLRSSDLNA (118 aa)) enclose the PB1 domain.

The protein belongs to the Aux/IAA family. In terms of assembly, homodimers and heterodimers. As to expression, expressed in roots, flowers and seedlings.

The protein resides in the nucleus. Functionally, aux/IAA proteins are short-lived transcriptional factors that function as repressors of early auxin response genes at low auxin concentrations. The sequence is that of Auxin-responsive protein IAA16 (IAA16) from Oryza sativa subsp. japonica (Rice).